Here is a 139-residue protein sequence, read N- to C-terminus: Small ribosomal subunit protein uS12 (139 aa).

Position 102 is a 3-methylthioaspartic acid (aspartate 102).

Belongs to the universal ribosomal protein uS12 family. Part of the 30S ribosomal subunit. Contacts proteins S8 and S17. May interact with IF1 in the 30S initiation complex.

With S4 and S5 plays an important role in translational accuracy. Functionally, interacts with and stabilizes bases of the 16S rRNA that are involved in tRNA selection in the A site and with the mRNA backbone. Located at the interface of the 30S and 50S subunits, it traverses the body of the 30S subunit contacting proteins on the other side and probably holding the rRNA structure together. The combined cluster of proteins S8, S12 and S17 appears to hold together the shoulder and platform of the 30S subunit. The protein is Small ribosomal subunit protein uS12 of Mycoplasma capricolum subsp. capricolum (strain California kid / ATCC 27343 / NCTC 10154).